Here is a 476-residue protein sequence, read N- to C-terminus: Ribulose bisphosphate carboxylase large chain (476 aa).

Substrate is bound by residues Asn-124 and Thr-174. Lys-176 functions as the Proton acceptor in the catalytic mechanism. Lys-178 provides a ligand contact to substrate. Lys-202, Asp-204, and Glu-205 together coordinate Mg(2+). N6-carboxylysine is present on Lys-202. The active-site Proton acceptor is the His-295. Arg-296, His-328, and Ser-380 together coordinate substrate.

This sequence belongs to the RuBisCO large chain family. Type I subfamily. Heterohexadecamer of 8 large chains and 8 small chains; disulfide-linked. The disulfide link is formed within the large subunit homodimers. Mg(2+) is required as a cofactor. The disulfide bond which can form in the large chain dimeric partners within the hexadecamer appears to be associated with oxidative stress and protein turnover.

The protein resides in the carboxysome. It carries out the reaction 2 (2R)-3-phosphoglycerate + 2 H(+) = D-ribulose 1,5-bisphosphate + CO2 + H2O. The enzyme catalyses D-ribulose 1,5-bisphosphate + O2 = 2-phosphoglycolate + (2R)-3-phosphoglycerate + 2 H(+). RuBisCO catalyzes two reactions: the carboxylation of D-ribulose 1,5-bisphosphate, the primary event in carbon dioxide fixation, as well as the oxidative fragmentation of the pentose substrate in the photorespiration process. Both reactions occur simultaneously and in competition at the same active site. This chain is Ribulose bisphosphate carboxylase large chain, found in Trichormus variabilis (strain ATCC 29413 / PCC 7937) (Anabaena variabilis).